The following is a 543-amino-acid chain: CTP synthase (543 aa).

The interval 1-265 (MARYIFITGG…DDEVLAAFGI (265 aa)) is amidoligase domain. Ser13 contacts CTP. Residue Ser13 participates in UTP binding. 14–19 (SLGKGL) is a binding site for ATP. Residue Tyr54 coordinates L-glutamine. An ATP-binding site is contributed by Asp71. Positions 71 and 139 each coordinate Mg(2+). Residues 146–148 (DIE), 186–191 (KTKPTQ), and Lys222 contribute to the CTP site. UTP contacts are provided by residues 186–191 (KTKPTQ) and Lys222. An ATP-binding site is contributed by 238-240 (RDV). Positions 291–542 (TIAIVGKYTG…IQAAVVQSRL (252 aa)) constitute a Glutamine amidotransferase type-1 domain. Gly353 contacts L-glutamine. Cys380 (nucleophile; for glutamine hydrolysis) is an active-site residue. L-glutamine-binding positions include 381-384 (FGMQ), Glu404, and Arg470. Residues His515 and Glu517 contribute to the active site.

Belongs to the CTP synthase family. Homotetramer.

It carries out the reaction UTP + L-glutamine + ATP + H2O = CTP + L-glutamate + ADP + phosphate + 2 H(+). The enzyme catalyses L-glutamine + H2O = L-glutamate + NH4(+). The catalysed reaction is UTP + NH4(+) + ATP = CTP + ADP + phosphate + 2 H(+). Its pathway is pyrimidine metabolism; CTP biosynthesis via de novo pathway; CTP from UDP: step 2/2. Its activity is regulated as follows. Allosterically activated by GTP, when glutamine is the substrate; GTP has no effect on the reaction when ammonia is the substrate. The allosteric effector GTP functions by stabilizing the protein conformation that binds the tetrahedral intermediate(s) formed during glutamine hydrolysis. Inhibited by the product CTP, via allosteric rather than competitive inhibition. Catalyzes the ATP-dependent amination of UTP to CTP with either L-glutamine or ammonia as the source of nitrogen. Regulates intracellular CTP levels through interactions with the four ribonucleotide triphosphates. This is CTP synthase from Bradyrhizobium sp. (strain BTAi1 / ATCC BAA-1182).